Consider the following 153-residue polypeptide: 6,7-dimethyl-8-ribityllumazine synthase (153 aa).

5-amino-6-(D-ribitylamino)uracil-binding positions include F22, 56-58 (AFE), and 80-82 (TVI). Residue 85–86 (ST) coordinates (2S)-2-hydroxy-3-oxobutyl phosphate. The active-site Proton donor is the H88. F113 contributes to the 5-amino-6-(D-ribitylamino)uracil binding site. R127 serves as a coordination point for (2S)-2-hydroxy-3-oxobutyl phosphate.

It belongs to the DMRL synthase family. In terms of assembly, forms an icosahedral capsid composed of 60 subunits, arranged as a dodecamer of pentamers.

It carries out the reaction (2S)-2-hydroxy-3-oxobutyl phosphate + 5-amino-6-(D-ribitylamino)uracil = 6,7-dimethyl-8-(1-D-ribityl)lumazine + phosphate + 2 H2O + H(+). Its pathway is cofactor biosynthesis; riboflavin biosynthesis; riboflavin from 2-hydroxy-3-oxobutyl phosphate and 5-amino-6-(D-ribitylamino)uracil: step 1/2. Its function is as follows. Catalyzes the formation of 6,7-dimethyl-8-ribityllumazine by condensation of 5-amino-6-(D-ribitylamino)uracil with 3,4-dihydroxy-2-butanone 4-phosphate. This is the penultimate step in the biosynthesis of riboflavin. The chain is 6,7-dimethyl-8-ribityllumazine synthase from Glaesserella parasuis serovar 5 (strain SH0165) (Haemophilus parasuis).